Here is a 288-residue protein sequence, read N- to C-terminus: Zinc finger protein 42 (288 aa).

Composition is skewed to basic and acidic residues over residues 1–11 (MNEQKMNEQMK) and 26–38 (ALDRLTLKQDEAR). The segment at 1-48 (MNEQKMNEQMKKTAKTSGQKGPGGRALDRLTLKQDEARPVQNTRVEAP) is disordered. 4 consecutive C2H2-type zinc fingers follow at residues 170–194 (LECPQAGCKKKLRGKTALRKHMLVH), 199–221 (HVCAECGKAFTESSKLKRHFLVH), 227–251 (YQCTFEGCGKRFSLDFNLRTHIRIH), and 258–281 (VCPFDGCEKSFIQSNNQKIHILTH). Glycyl lysine isopeptide (Lys-Gly) (interchain with G-Cter in ubiquitin) cross-links involve residues Lys213 and Lys215.

The protein belongs to the krueppel C2H2-type zinc-finger protein family. Post-translationally, polyubiquitinated by RNF12, leading to proteasomal degradation. As to expression, restricted to testis, to germ cells in the early stages of spermatogenesis. Not expressed in spermatids, nor spermatozoa. Expressed in embryonic stem (ES) cells.

It is found in the nucleus. In terms of biological role, involved in the reprogramming of X-chromosome inactivation during the acquisition of pluripotency. Required for efficient elongation of TSIX, a non-coding RNA antisense to XIST. Binds DXPas34 enhancer within the TSIX promoter. Involved in ES cell self-renewal. The protein is Zinc finger protein 42 (Zfp42) of Mus musculus (Mouse).